The primary structure comprises 1416 residues: Uveal autoantigen with coiled-coil domains and ankyrin repeats (1416 aa).

Met-1 bears the N-acetylmethionine mark. Residues 1 to 24 are disordered; the sequence is MKSLKSRLRRQDVPGPASSGAAAA. ANK repeat units follow at residues 38–66, 67–96, 100–129, 133–162, 166–195, and 199–228; these read LMKA…KLDV, EGRS…DITT, AGRN…PTEH, QGRT…SVNA, DGRT…DVNS, and QNRT…DISL. 2 coiled-coil regions span residues 286 to 374 and 438 to 1386; these read VKSH…NRFK and ENEI…IYRT. A Glycyl lysine isopeptide (Lys-Gly) (interchain with G-Cter in SUMO2) cross-link involves residue Lys-1035.

As to quaternary structure, component of the apoptosome complex, composed of APAF1, pro-caspase-9 and UACA. In the complex, it probably interacts directly with APAF1. Interacts with LGALS3, ARF6 and ACTB. Interacts with RAB39A. Highly expressed in skeletal muscle, heart, kidney and pancreas. Expressed in choroid, retina and epidermal melanocytes. Expressed in eye muscles and thyroid follicular cells.

It localises to the nucleus. The protein localises to the cytoplasm. Its subcellular location is the cytoskeleton. In terms of biological role, regulates APAF1 expression and plays an important role in the regulation of stress-induced apoptosis. Promotes apoptosis by regulating three pathways, apoptosome up-regulation, LGALS3/galectin-3 down-regulation and NF-kappa-B inactivation. Regulates the redistribution of APAF1 into the nucleus after proapoptotic stress. Down-regulates the expression of LGALS3 by inhibiting NFKB1. Functionally, modulates isoactin dynamics to regulate the morphological alterations required for cell growth and motility. Interaction with ARF6 may modulate cell shape and motility after injury. May be involved in multiple neurite formation. The sequence is that of Uveal autoantigen with coiled-coil domains and ankyrin repeats (UACA) from Homo sapiens (Human).